Here is a 571-residue protein sequence, read N- to C-terminus: DExH-box ATP-dependent RNA helicase DExH16, mitochondrial (571 aa).

The transit peptide at methionine 1–proline 56 directs the protein to the mitochondrion. In terms of domain architecture, Helicase ATP-binding spans isoleucine 83–proline 212. Glycine 96–threonine 103 provides a ligand contact to ATP. Positions aspartate 176 to glutamine 179 match the DEIH box; degenerate motif. Residues leucine 213–serine 399 enclose the Helicase C-terminal domain.

It belongs to the DExH box helicase family. In terms of assembly, homodimer; in free form. Component of the mitochondrial degradosome (mtEXO) complex which is a heteropentamer containing 2 copies of SUPV3L1 and 3 copies of PNPT1. It depends on Mg(2+) as a cofactor. Mn(2+) serves as cofactor. In terms of tissue distribution, weakly expressed.

The protein resides in the nucleus. The protein localises to the mitochondrion matrix. Its subcellular location is the mitochondrion nucleoid. The catalysed reaction is ATP + H2O = ADP + phosphate + H(+). Activated by the presence of mitochondrial RNA. Functionally, major helicase player in mitochondrial RNA metabolism. Component of the mitochondrial degradosome (mtEXO) complex, that degrades 3' overhang double-stranded RNA with a 3'-to-5' directionality in an ATP-dependent manner. ATPase and ATP-dependent multisubstrate helicase, able to unwind double-stranded (ds) DNA and RNA, and RNA/DNA heteroduplexes in the 5'-to-3' direction. Plays a role in the RNA surveillance system in mitochondria; regulates the stability of mature mRNAs, the removal of aberrantly formed mRNAs and the rapid degradation of non coding processing intermediates. Required during pollen development. This is DExH-box ATP-dependent RNA helicase DExH16, mitochondrial from Arabidopsis thaliana (Mouse-ear cress).